The primary structure comprises 305 residues: MSIFFSIRFWPAAISAAILWLPQVLGRSNGTAPNYTVEELWKLETTFWDNFLYPANVEQMEAINSTLFTQDVQGRVDITRVFNGSELNTEYIFGLFSDPDHVSLVGVPVDYSITQFIAQGNIASATTVVTFNATSFGNLLVPVTIDTWIMWDADGRIMQYDATFRWFGFLLDTLVEALAESINGTTSQATASLTQLLATTICATHDQYCTGANQQYDNNTACLDFLTSAIPLGKDYELGRNTLLCREVHEHMVQYDPALHCPHIGPTGGDYCVDDQTYAQKVLQKYFNQSWIVGVPSTGDIWLGD.

Residues 1 to 26 form the signal peptide; that stretch reads MSIFFSIRFWPAAISAAILWLPQVLG. 8 N-linked (GlcNAc...) asparagine glycosylation sites follow: N29, N34, N64, N83, N132, N183, N218, and N288.

The protein belongs to the bfoA family.

Functionally, part of the gene cluster that mediates the biosynthesis of aurasperone B, a dimeric gamma-naphthopyrone. The first step in the biosynthesis of aurasperone B is the production of gamma-naphthopyrone precursor YWA1 by the non-reducing polyketide synthase albA, via condensation of one acetyl-CoA starter unit with 6 malonyl-CoA units. YWA1 is then methylated by aunE at position C-6 to yield foncesin which is further methylated at position C-8 by aunD to produce fonsecin B. A key enzyme in the biosynthetic pathway is the cytochrome P450 monooxygenase aunB which catalyzes the oxidative dimerization of fonsecin B to aurasperone B. AunB also catalyzes the oxidative dimerization of rubrofusarin B into aurasperone A. The sequence is that of Aurasperone B biosynthesis cluster protein A from Aspergillus niger (strain ATCC 1015 / CBS 113.46 / FGSC A1144 / LSHB Ac4 / NCTC 3858a / NRRL 328 / USDA 3528.7).